We begin with the raw amino-acid sequence, 86 residues long: Putative regulatory protein BBR47_37350 (86 aa).

Belongs to the RemA family.

The chain is Putative regulatory protein BBR47_37350 from Brevibacillus brevis (strain 47 / JCM 6285 / NBRC 100599).